Reading from the N-terminus, the 93-residue chain is Small ribosomal subunit protein bS6 (93 aa).

The protein belongs to the bacterial ribosomal protein bS6 family.

In terms of biological role, binds together with bS18 to 16S ribosomal RNA. This chain is Small ribosomal subunit protein bS6 (rpsF), found in Treponema pallidum (strain Nichols).